The following is a 215-amino-acid chain: Pyrrolidone-carboxylate peptidase (215 aa).

Catalysis depends on residues E81, C144, and H168.

The protein belongs to the peptidase C15 family. In terms of assembly, homotetramer.

Its subcellular location is the cytoplasm. The enzyme catalyses Release of an N-terminal pyroglutamyl group from a polypeptide, the second amino acid generally not being Pro.. Functionally, removes 5-oxoproline from various penultimate amino acid residues except L-proline. The polypeptide is Pyrrolidone-carboxylate peptidase (pcp) (Bacillus subtilis (strain 168)).